A 216-amino-acid polypeptide reads, in one-letter code: Large ribosomal subunit protein uL1A (216 aa).

Phosphoserine occurs at positions 85 and 128.

Belongs to the universal ribosomal protein uL1 family. As to quaternary structure, component of the large ribosomal subunit (LSU). Mature yeast ribosomes consist of a small (40S) and a large (60S) subunit. The 40S small subunit contains 1 molecule of ribosomal RNA (18S rRNA) and at least 33 different proteins. The large 60S subunit contains 3 rRNA molecules (25S, 5.8S and 5S rRNA) and at least 46 different proteins. uL1 forms part of the L1 stalk.

It is found in the cytoplasm. In terms of biological role, component of the ribosome, a large ribonucleoprotein complex responsible for the synthesis of proteins in the cell. The small ribosomal subunit (SSU) binds messenger RNAs (mRNAs) and translates the encoded message by selecting cognate aminoacyl-transfer RNA (tRNA) molecules. The large subunit (LSU) contains the ribosomal catalytic site termed the peptidyl transferase center (PTC), which catalyzes the formation of peptide bonds, thereby polymerizing the amino acids delivered by tRNAs into a polypeptide chain. The nascent polypeptides leave the ribosome through a tunnel in the LSU and interact with protein factors that function in enzymatic processing, targeting, and the membrane insertion of nascent chains at the exit of the ribosomal tunnel. uL1 forms part of the L1 stalk, a mobile element that plays a role in evacuating the exit-site tRNA. This chain is Large ribosomal subunit protein uL1A (rpl102), found in Schizosaccharomyces pombe (strain 972 / ATCC 24843) (Fission yeast).